Consider the following 295-residue polypeptide: Putative F-box protein At5g44220 (295 aa).

The F-box domain occupies 56 to 102 (STNSDLLPMDLIKEILKRLPAKTLARFLCVSKLWSSIIRSRDLMKLF).

This chain is Putative F-box protein At5g44220, found in Arabidopsis thaliana (Mouse-ear cress).